Consider the following 97-residue polypeptide: Plastocyanin (97 aa).

The Plastocyanin-like domain maps to 1–97; the sequence is AEVKLGADDG…AGMKGEVTVT (97 aa). The Cu cation site is built by H37, C82, H85, and M90.

This sequence belongs to the plastocyanin family. Cu(2+) is required as a cofactor.

It localises to the plastid. The protein localises to the chloroplast thylakoid membrane. Participates in electron transfer between P700 and the cytochrome b6-f complex in photosystem I. The sequence is that of Plastocyanin (PETE) from Daucus carota (Wild carrot).